The chain runs to 510 residues: ETS translocation variant 5 (510 aa).

Positions 132 to 245 (KPLTPPATPL…PGDSRPSYHR (114 aa)) are disordered. The span at 163 to 174 (TPGAGPVQGVGP) shows a compositional bias: low complexity. The span at 211 to 224 (QYPSEQRFQRQLSE) shows a compositional bias: polar residues. A Phosphoserine modification is found at serine 248. Lysine 350 participates in a covalent cross-link: Glycyl lysine isopeptide (Lys-Gly) (interchain with G-Cter in SUMO2). The ETS DNA-binding region spans 368-448 (LQLWQFLVTL…AGERYVYKFV (81 aa)).

It belongs to the ETS family. In terms of assembly, interacts (via C-terminal) with ZMYM5 (via N-terminal 120 amino acid region). In the brain, expressed predominantly in the cerebral cortex, the amygdala and the hypothalamus. Within the cerebral cortex, there is conspicuously high expression in cortical layers 2, 4 and 6 while expression is almost absent from layers 1, 3 and 5. High expression is also observed in the dorsal and ventral endopiriform claustrum. Strong expression is observed in limited parts of the amygdala including the basolateral amygdaloid nucleus, the bed stria terminalis and the central amygdaloid nucleus. Low to moderate levels are found in the hypothalamus while expression is almost absent in the thalamus. Hypothalamic expression is seen in the dorsomedial hypothalamic nucleus and also the central, dorsomedial and ventrolateral parts of the ventromedial hypothalamic nucleus. Strong expression is also identified in the nigrostriatal tract. In the mesencephalon, expression is restricted to the ventral tegmental area including the parabrachial pigmented nucleus. In the hippocampus, strongly expressed in the pyramidal cell layer. Some expression is also found in the lacunosum moleculare layer. Low levels of expression in the cerebellum, including the granular, molecular and Purkinje cell layers.

The protein localises to the nucleus. In terms of biological role, binds to DNA sequences containing the consensus nucleotide core sequence 5'-GGAA.-3'. This chain is ETS translocation variant 5 (Etv5), found in Mus musculus (Mouse).